The following is a 403-amino-acid chain: Acetylornithine/succinyldiaminopimelate aminotransferase (403 aa).

Pyridoxal 5'-phosphate contacts are provided by residues 107 to 108 (GA) and Phe-140. Position 143 (Arg-143) interacts with N(2)-acetyl-L-ornithine. 225–228 (DEVQ) contributes to the pyridoxal 5'-phosphate binding site. Lys-254 is subject to N6-(pyridoxal phosphate)lysine. Thr-282 provides a ligand contact to N(2)-acetyl-L-ornithine. Thr-283 serves as a coordination point for pyridoxal 5'-phosphate.

It belongs to the class-III pyridoxal-phosphate-dependent aminotransferase family. ArgD subfamily. As to quaternary structure, homodimer. Requires pyridoxal 5'-phosphate as cofactor.

The protein resides in the cytoplasm. It catalyses the reaction N(2)-acetyl-L-ornithine + 2-oxoglutarate = N-acetyl-L-glutamate 5-semialdehyde + L-glutamate. It carries out the reaction N-succinyl-(2S,6S)-2,6-diaminopimelate + 2-oxoglutarate = (S)-2-succinylamino-6-oxoheptanedioate + L-glutamate. Its pathway is amino-acid biosynthesis; L-arginine biosynthesis; N(2)-acetyl-L-ornithine from L-glutamate: step 4/4. The protein operates within amino-acid biosynthesis; L-lysine biosynthesis via DAP pathway; LL-2,6-diaminopimelate from (S)-tetrahydrodipicolinate (succinylase route): step 2/3. In terms of biological role, involved in both the arginine and lysine biosynthetic pathways. This chain is Acetylornithine/succinyldiaminopimelate aminotransferase, found in Photorhabdus laumondii subsp. laumondii (strain DSM 15139 / CIP 105565 / TT01) (Photorhabdus luminescens subsp. laumondii).